Reading from the N-terminus, the 100-residue chain is MAKKGMVEREKKRQRLVAKYAHKRQALLEQISQASSQQERMDLHRQLQRLPRNSAPTRLRNRCWVTGRSRGYYRDFGLSRHVLREMAHEGLLPGVTKSSW.

The protein belongs to the universal ribosomal protein uS14 family. Part of the 30S ribosomal subunit. Contacts proteins S3 and S10.

Functionally, binds 16S rRNA, required for the assembly of 30S particles and may also be responsible for determining the conformation of the 16S rRNA at the A site. This chain is Small ribosomal subunit protein uS14, found in Acaryochloris marina (strain MBIC 11017).